The primary structure comprises 677 residues: Glutamine--fructose-6-phosphate aminotransferase [isomerizing] 1 (677 aa).

The active-site Nucleophile is the cysteine 2. Positions 2–269 (CGIFAYLNFH…DGEVVNLKDG (268 aa)) constitute a Glutamine amidotransferase type-2 domain. SIS domains follow at residues 353–492 (HLKT…DTIS) and 524–667 (LAQL…VDQP). Substrate contacts are provided by residues 370–371 (TS), 415–417 (SQS), threonine 420, and histidine 571.

As to quaternary structure, homotetramer, may also exist as homodimers. Highly expressed in flowers specifically in mature anthers, mature pollen grains and pollen tubes. Barely observed in roots, leaves and stems.

It carries out the reaction D-fructose 6-phosphate + L-glutamine = D-glucosamine 6-phosphate + L-glutamate. It functions in the pathway nucleotide-sugar biosynthesis; UDP-N-acetyl-alpha-D-glucosamine biosynthesis; alpha-D-glucosamine 6-phosphate from D-fructose 6-phosphate: step 1/1. Functionally, controls the flux of glucose into the hexosamine biosynthetic pathway (HBP) leading to glucosamine (GlcN) content homeostasis. Involved in regulating the availability of precursors for N- and O-linked glycosylation of proteins. Required during pollen maturation and pollen tube formation by triggering polar deposition of pectin and callose in the pollen cell wall. Promotes tolerance to tunicamycin (Tm), an inhibitor of proteins N-glycosylation in endoplasmic reticulum (ER). The chain is Glutamine--fructose-6-phosphate aminotransferase [isomerizing] 1 from Arabidopsis thaliana (Mouse-ear cress).